A 435-amino-acid chain; its full sequence is MQTTNGSDSTLATSGATPPNQQTPPPPQQWQQQQQQQQQWMAAMQYPPAAAMMMMQQQQMLMYPHQYVPYNQGPYQQHHPQLHQYGSYQQHQHQQHKAIDRGSGDDVKTLWVGDLLHWMDETYLHSCFSHTGEVSSVKVIRNKLTSQSEGYGFVEFLSRAAAEEVLQNYSGSVMPNSDQPFRINWASFSTGEKRAVENGPDLSVFVGDLSPDVTDVLLHETFSDRYPSVKSAKVVIDSNTGRSKGYGFVRFGDENERSRALTEMNGAYCSNRQMRVGIATPKRAIANQQQHSSQAVILAGGHGSNGSMGYGSQSDGESTNATIFVGGIDPDVIDEDLRQPFSQFGEVVSVKIPVGKGCGFVQFADRKSAEDAIESLNGTVIGKNTVRLSWGRSPNKQWRGDSGQQWNGGYSRGHGYNNGGGYANHHDSNNYHGEN.

Over residues methionine 1–glycine 15 the composition is skewed to polar residues. 2 disordered regions span residues methionine 1–methionine 41 and tyrosine 85–glycine 104. The segment covering glutamine 29–methionine 41 has biased composition (low complexity). RRM domains lie at lysine 108–phenylalanine 188, leucine 202–proline 281, and alanine 321–serine 393. The segment at arginine 392 to arginine 412 is disordered.

It belongs to the polyadenylate-binding RBP47 family. As to quaternary structure, interacts with the poly(A) tail of mRNA in nucleus. Expressed at low levels in leaves, stems, flowers, and seedlings.

The protein localises to the nucleus. Its subcellular location is the cytoplasmic granule. Functionally, heterogeneous nuclear ribonucleoprotein (hnRNP)-protein binding the poly(A) tail of mRNA and probably involved in some steps of pre-mRNA maturation. The chain is Polyadenylate-binding protein RBP47B (RBP47B) from Arabidopsis thaliana (Mouse-ear cress).